The chain runs to 263 residues: Insulin-like growth factor-binding protein 1 (263 aa).

A signal peptide spans 1–25 (MPEVLAVRAWPLLLSLAVQLGATVG). Positions 28–109 (QPWRCAPCSA…TRGQGACMTT (82 aa)) constitute an IGFBP N-terminal domain. Disulfide bonds link Cys-32–Cys-59, Cys-35–Cys-61, Cys-43–Cys-62, Cys-50–Cys-65, Cys-73–Cys-86, and Cys-80–Cys-106. Residues 102 to 131 (GQGACMTTPSDEATDTKDTTSPENVSPESS) form a disordered region. Residues Ser-122, Ser-127, Ser-130, Ser-148, and Ser-160 each carry the phosphoserine modification. The segment covering 122 to 131 (SPENVSPESS) has biased composition (polar residues). Tyr-162 carries the phosphotyrosine modification. The Thyroglobulin type-1 domain occupies 177–255 (KEPCQRELYK…SVAVRGDPKC (79 aa)). 3 cysteine pairs are disulfide-bonded: Cys-180–Cys-210, Cys-221–Cys-232, and Cys-234–Cys-255. Residue Ser-246 is modified to Phosphoserine. A Cell attachment site motif is present at residues 250 to 252 (RGD).

In terms of assembly, binds equally well IGF1 and IGF2. Interacts with integrin ITGA5:ITGB1. Interacts with VHL; this interaction inhibits HIF1A degradation.

Its subcellular location is the secreted. In terms of biological role, multifunctional protein that plays a critical role in regulating the availability of IGFs such as IGF1 and IGF2 to their receptors and thereby regulates IGF-mediated cellular processes including cell migration, proliferation, differentiation or apoptosis in a cell-type specific manner. Also plays a positive role in cell migration by interacting with integrin ITGA5:ITGB1 through its RGD motif. Mechanistically, binding to integrins leads to activation of focal adhesion kinase/PTK2 and stimulation of the mitogen-activated protein kinase (MAPK) pathway. Regulates cardiomyocyte apoptosis by suppressing HIF-1alpha/HIF1A degradation through ubiquitination. The sequence is that of Insulin-like growth factor-binding protein 1 (IGFBP1) from Bos taurus (Bovine).